Consider the following 315-residue polypeptide: Isoaspartyl peptidase/L-asparaginase 1 (315 aa).

S169 is subject to Phosphoserine. Residue T183 is the Nucleophile of the active site. Residues 211-214 (RIGD) and 233-236 (TGKG) contribute to the substrate site.

Belongs to the Ntn-hydrolase family. As to quaternary structure, heterotetramer of two alpha and two beta chains arranged as a dimer of alpha/beta heterodimers. Cleaved into an alpha and beta chain by autocatalysis; this activates the enzyme. The N-terminal residue of the beta subunit is responsible for the nucleophile hydrolase activity.

It carries out the reaction Cleavage of a beta-linked Asp residue from the N-terminus of a polypeptide.. Acts in asparagine catabolism but also in the final steps of protein and degradation via hydrolysis of a range of isoaspartyl dipeptides. The affinity for Asn and at least 4 isoaspartyl dipeptides (L-beta-Asp-Ala, L-beta-Asp-Gly, L-beta-Asp-Leu, L-beta-Asp-Phe) is quite low, KM being greater than 4.0 mM. The enzyme is inactive on alpha-aspartyl dipeptides. The chain is Isoaspartyl peptidase/L-asparaginase 1 from Arabidopsis thaliana (Mouse-ear cress).